Here is a 143-residue protein sequence, read N- to C-terminus: Transcriptional regulator MraZ (143 aa).

SpoVT-AbrB domains lie at 5–47 (EYTH…PLIE) and 76–119 (ACEC…DAER).

It belongs to the MraZ family. Forms oligomers.

The protein localises to the cytoplasm. Its subcellular location is the nucleoid. The protein is Transcriptional regulator MraZ of Limosilactobacillus fermentum (strain NBRC 3956 / LMG 18251) (Lactobacillus fermentum).